The sequence spans 363 residues: MSGNTYGKLFTVTTAGESHGPALVAIVDGCPPGLELTLEDLQRDLDRRKPGTSRHTTQRQEPDEVEILSGVFEGKTTGCSIGLLIRNTDQKSKDYSAIKDLFRPAHADYSYHHKYGIRDYRGGGRSSARETAMRVAAGAIAKKYLASQGIVIRGYMSQLGPIEIPFKTWDSVENNAFFSPDPDKVAELEAYMDQLRRDQDSVGAKITVVAEGVMPGLGEPIFDRLDAELAHALMSINAVKGVEIGAGFACVAQRGTEHRDELTPQGFLSNNAGGILGGISSGQPIVAHLALKPTSSITTPGRSIDIDGNPVDVITKGRHDPCVGIRATPIAEAMMAIVLMDHLLRHRGQNADVRVSTPVLGQL.

Residues 44-63 form a disordered region; that stretch reads DLDRRKPGTSRHTTQRQEPD. NADP(+) contacts are provided by Arg48 and Arg54. FMN-binding positions include 125-127, 237-238, Gly277, 292-296, and Arg318; these read RSS, NA, and KPTSS.

The protein belongs to the chorismate synthase family. Homotetramer. Requires FMNH2 as cofactor.

It carries out the reaction 5-O-(1-carboxyvinyl)-3-phosphoshikimate = chorismate + phosphate. It functions in the pathway metabolic intermediate biosynthesis; chorismate biosynthesis; chorismate from D-erythrose 4-phosphate and phosphoenolpyruvate: step 7/7. In terms of biological role, catalyzes the anti-1,4-elimination of the C-3 phosphate and the C-6 proR hydrogen from 5-enolpyruvylshikimate-3-phosphate (EPSP) to yield chorismate, which is the branch point compound that serves as the starting substrate for the three terminal pathways of aromatic amino acid biosynthesis. This reaction introduces a second double bond into the aromatic ring system. This is Chorismate synthase from Pseudomonas fluorescens (strain ATCC BAA-477 / NRRL B-23932 / Pf-5).